A 249-amino-acid chain; its full sequence is Serine 3-dehydrogenase (249 aa).

An NADP(+)-binding site is contributed by 6 to 30; it reads LITGATSGFGQATAQRFVKEGWKVI. Ser-135 is a substrate binding site. Tyr-148 acts as the Proton acceptor in catalysis.

It belongs to the short-chain dehydrogenases/reductases (SDR) family. Homotetramer.

The enzyme catalyses L-serine + NADP(+) = aminoacetaldehyde + CO2 + NADPH. Functionally, catalyzes the oxidation of the hydroxyl group of serine to form 2-aminomalonate semialdehyde which is spontaneously converted into 2-aminoacetaldehyde and CO(2). Also acts on D-serine, L-glycerate, D-glycerate and 2-methyl-DL-serine. Does not act on O-methyl-DL-serine and L-threonine. The polypeptide is Serine 3-dehydrogenase (sdh) (Rhizobium radiobacter (Agrobacterium tumefaciens)).